The primary structure comprises 475 residues: Ribulose bisphosphate carboxylase large chain (475 aa).

The propeptide occupies 1-2; that stretch reads MS. Position 3 is an N-acetylproline (P3). N6,N6,N6-trimethyllysine is present on K14. Substrate contacts are provided by N123 and T173. Catalysis depends on K175, which acts as the Proton acceptor. K177 is a substrate binding site. Positions 201, 203, and 204 each coordinate Mg(2+). N6-carboxylysine is present on K201. The active-site Proton acceptor is the H294. R295, H327, and S379 together coordinate substrate.

This sequence belongs to the RuBisCO large chain family. Type I subfamily. In terms of assembly, heterohexadecamer of 8 large chains and 8 small chains. It depends on Mg(2+) as a cofactor.

Its subcellular location is the plastid. The catalysed reaction is 2 (2R)-3-phosphoglycerate + 2 H(+) = D-ribulose 1,5-bisphosphate + CO2 + H2O. It catalyses the reaction D-ribulose 1,5-bisphosphate + O2 = 2-phosphoglycolate + (2R)-3-phosphoglycerate + 2 H(+). RuBisCO catalyzes two reactions: the carboxylation of D-ribulose 1,5-bisphosphate, the primary event in carbon dioxide fixation, as well as the oxidative fragmentation of the pentose substrate in the photorespiration process. Both reactions occur simultaneously and in competition at the same active site. This Aneura mirabilis (Parasitic liverwort) protein is Ribulose bisphosphate carboxylase large chain.